Reading from the N-terminus, the 394-residue chain is Elongation factor Tu 1 (394 aa).

The tr-type G domain maps to 10–204 (KPHVNVGTIG…ALDSYIPEPE (195 aa)). The G1 stretch occupies residues 19-26 (GHVDHGKT). Residue 19–26 (GHVDHGKT) participates in GTP binding. T26 contributes to the Mg(2+) binding site. Residues 60 to 64 (GITIS) are G2. Residues 81–84 (DCPG) form a G3 region. Residues 81–85 (DCPGH) and 136–139 (NKCD) contribute to the GTP site. Positions 136-139 (NKCD) are G4. A G5 region spans residues 174 to 176 (SAL).

The protein belongs to the TRAFAC class translation factor GTPase superfamily. Classic translation factor GTPase family. EF-Tu/EF-1A subfamily. In terms of assembly, monomer.

The protein localises to the cytoplasm. It carries out the reaction GTP + H2O = GDP + phosphate + H(+). Functionally, GTP hydrolase that promotes the GTP-dependent binding of aminoacyl-tRNA to the A-site of ribosomes during protein biosynthesis. The chain is Elongation factor Tu 1 from Photorhabdus laumondii subsp. laumondii (strain DSM 15139 / CIP 105565 / TT01) (Photorhabdus luminescens subsp. laumondii).